Consider the following 275-residue polypeptide: tRNA pseudouridine synthase B (275 aa).

The active-site Nucleophile is Asp-38.

It belongs to the pseudouridine synthase TruB family. Type 1 subfamily.

The catalysed reaction is uridine(55) in tRNA = pseudouridine(55) in tRNA. In terms of biological role, responsible for synthesis of pseudouridine from uracil-55 in the psi GC loop of transfer RNAs. This chain is tRNA pseudouridine synthase B, found in Nitratiruptor sp. (strain SB155-2).